The following is a 706-amino-acid chain: Phenylalanine--tRNA ligase beta subunit, chloroplastic (706 aa).

The B5 domain maps to 300-388 (KVLKPIVLNY…RLHGFNNFLT (89 aa)). Positions 366, 372, 375, and 376 each coordinate Mg(2+). In terms of domain architecture, FDX-ACB spans 612-705 (SVYPKIVKDL…LELKVQAILR (94 aa)).

It belongs to the phenylalanyl-tRNA synthetase beta subunit family. Type 1 subfamily. In terms of assembly, tetramer of two alpha and two beta subunits. Mg(2+) is required as a cofactor.

Its subcellular location is the plastid. The protein localises to the chloroplast. It catalyses the reaction tRNA(Phe) + L-phenylalanine + ATP = L-phenylalanyl-tRNA(Phe) + AMP + diphosphate + H(+). This Phaeodactylum tricornutum (strain CCAP 1055/1) protein is Phenylalanine--tRNA ligase beta subunit, chloroplastic.